We begin with the raw amino-acid sequence, 122 residues long: Small ribosomal subunit protein uS13 (122 aa).

The disordered stretch occupies residues Gly95 to Lys122.

This sequence belongs to the universal ribosomal protein uS13 family. Part of the 30S ribosomal subunit. Forms a loose heterodimer with protein S19. Forms two bridges to the 50S subunit in the 70S ribosome.

In terms of biological role, located at the top of the head of the 30S subunit, it contacts several helices of the 16S rRNA. In the 70S ribosome it contacts the 23S rRNA (bridge B1a) and protein L5 of the 50S subunit (bridge B1b), connecting the 2 subunits; these bridges are implicated in subunit movement. Contacts the tRNAs in the A and P-sites. This is Small ribosomal subunit protein uS13 from Nitratidesulfovibrio vulgaris (strain ATCC 29579 / DSM 644 / CCUG 34227 / NCIMB 8303 / VKM B-1760 / Hildenborough) (Desulfovibrio vulgaris).